Here is a 164-residue protein sequence, read N- to C-terminus: MAFKDNAVEIEERVVAINRVTKVVKGGRRLRFAALVVVGDRNGRVGFGTGKAQEVPEAIRKAVESAKKNMIEVPMVGTTIPHEVRSEFGGARVLLKPASEGSGVAAGGATRAVIELAGIADVTSKSLGSNTPINIVRATVEGLKQLKRAEEVAALRGISVSDLA.

The S5 DRBM domain occupies 10-73 (IEERVVAINR…ESAKKNMIEV (64 aa)).

This sequence belongs to the universal ribosomal protein uS5 family. Part of the 30S ribosomal subunit. Contacts proteins S4 and S8.

With S4 and S12 plays an important role in translational accuracy. In terms of biological role, located at the back of the 30S subunit body where it stabilizes the conformation of the head with respect to the body. In Streptococcus suis (strain 98HAH33), this protein is Small ribosomal subunit protein uS5.